A 553-amino-acid chain; its full sequence is Probable malate:quinone oxidoreductase (553 aa).

Residues 524 to 553 (PPPKIDVNTPSQATGTAPARPAKASADMAL) form a disordered region.

It belongs to the MQO family. The cofactor is FAD.

It catalyses the reaction (S)-malate + a quinone = a quinol + oxaloacetate. It functions in the pathway carbohydrate metabolism; tricarboxylic acid cycle; oxaloacetate from (S)-malate (quinone route): step 1/1. This chain is Probable malate:quinone oxidoreductase, found in Burkholderia lata (strain ATCC 17760 / DSM 23089 / LMG 22485 / NCIMB 9086 / R18194 / 383).